The chain runs to 101 residues: Small ribosomal subunit protein uS14 (101 aa).

Positions 50–70 (SLPRDSSPSRQRKRCRQTGRP) are disordered. Positions 59 to 68 (RQRKRCRQTG) are enriched in basic residues.

It belongs to the universal ribosomal protein uS14 family. As to quaternary structure, part of the 30S ribosomal subunit. Contacts proteins S3 and S10.

In terms of biological role, binds 16S rRNA, required for the assembly of 30S particles and may also be responsible for determining the conformation of the 16S rRNA at the A site. The chain is Small ribosomal subunit protein uS14 from Erwinia tasmaniensis (strain DSM 17950 / CFBP 7177 / CIP 109463 / NCPPB 4357 / Et1/99).